The chain runs to 530 residues: Probable NADH-specific resorcinol 4-hydroxylase (530 aa).

The catalysed reaction is resorcinol + NADH + O2 + H(+) = benzene-1,2,4-triol + NAD(+) + H2O. In terms of biological role, single-component hydroxylase that is part of the gamma-resorcylate (GRA) degradation pathway. GRA is initially converted by GRA decarboxylase to resorcinol, which is hydroxylated by resorcinol 4-hydroxylase. The protein is Probable NADH-specific resorcinol 4-hydroxylase (tsdB) of Rhodococcus jostii (strain RHA1).